A 523-amino-acid polypeptide reads, in one-letter code: Cyclin-dependent kinase 17 (523 aa).

A Phosphoserine modification is found at Ser-9. A disordered region spans residues 31–55; sequence IEESSSKDNEPIVKNGRPPTSHSMH. Phosphoserine is present on residues Ser-80, Ser-92, and Ser-105. Residues 103–123 form a disordered region; that stretch reads MGSDGESDQASGTSSDEVQSP. A compositionally biased stretch (polar residues) spans 110-123; it reads DQASGTSSDEVQSP. Phosphoserine occurs at positions 137, 146, 165, and 180. The Protein kinase domain maps to 192–473; the sequence is YIKLEKLGEG…AEEAMKHVYF (282 aa). Residues 198-206 and Lys-221 contribute to the ATP site; that span reads LGEGTYATV. The active-site Proton acceptor is Asp-313.

It belongs to the protein kinase superfamily. CMGC Ser/Thr protein kinase family. CDC2/CDKX subfamily. As to quaternary structure, found in a complex containing CABLES1, CDK16 and TDRD7. Interacts with TDRD7. Brain specific. Within the brain it is concentrated in the neuronal layers of the hippocampus and olfactory bulb, which mostly consist of post-mitotic neurons.

The catalysed reaction is L-seryl-[protein] + ATP = O-phospho-L-seryl-[protein] + ADP + H(+). It catalyses the reaction L-threonyl-[protein] + ATP = O-phospho-L-threonyl-[protein] + ADP + H(+). In terms of biological role, may play a role in terminally differentiated neurons. Has a Ser/Thr-phosphorylating activity for histone H1. The sequence is that of Cyclin-dependent kinase 17 (Cdk17) from Rattus norvegicus (Rat).